A 180-amino-acid chain; its full sequence is uncharacterized protein (180 aa).

The region spanning 35-163 (LRHRATYIVV…TPDSLKALAL (129 aa)) is the Nudix hydrolase domain. A Nudix box motif is present at residues 72-94 (GGVVQADEQLLESARREAEEELG). E88 and E92 together coordinate Mg(2+).

Belongs to the Nudix hydrolase family. It depends on Mg(2+) as a cofactor.

This is an uncharacterized protein from Shigella flexneri.